Consider the following 641-residue polypeptide: Soluble starch synthase 1, chloroplastic/amyloplastic (641 aa).

Position 145 (Lys145) interacts with ADP-alpha-D-glucose.

Belongs to the glycosyltransferase 1 family. Bacterial/plant glycogen synthase subfamily. High expression in leaves and very low in tubers.

Its subcellular location is the plastid. It localises to the chloroplast. The protein resides in the amyloplast. The enzyme catalyses [(1-&gt;4)-alpha-D-glucosyl](n) + ADP-alpha-D-glucose = [(1-&gt;4)-alpha-D-glucosyl](n+1) + ADP + H(+). The protein operates within glycan biosynthesis; starch biosynthesis. Functionally, plays a minor role in starch synthesis in storage organs (tubers), but may contribute to the deposition of transient starch in chloroplasts of leaves. This chain is Soluble starch synthase 1, chloroplastic/amyloplastic, found in Solanum tuberosum (Potato).